Reading from the N-terminus, the 1035-residue chain is Potassium-transporting ATPase alpha chain 1 (1035 aa).

The interval 1–41 is disordered; sequence MGKADNYELYSVELGPGPGGDMAAKMSKKKKAGGGGGKRKE. The Cytoplasmic segment spans residues 1–98; sequence MGKADNYELY…NALRPPRGTP (98 aa). A phosphotyrosine mark is found at tyrosine 7 and tyrosine 10. Positions 26-40 are enriched in basic residues; that stretch reads MSKKKKAGGGGGKRK. Position 27 is a phosphoserine (serine 27). A helical membrane pass occupies residues 99 to 119; sequence EYVKFARQLAGGLQCLMWVAA. The Lumenal portion of the chain corresponds to 120 to 142; the sequence is AICLIAFAIQASEGDLTTDDNLY. Residues 143–163 traverse the membrane as a helical segment; the sequence is LALALIAVVVVTGCFGYYQEF. At 164-299 the chain is on the cytoplasmic side; sequence KSTNIIASFK…NEKTPIAIEI (136 aa). The chain crosses the membrane as a helical span at residues 300 to 319; it reads EHFVDIIAGLAILFGATFFV. Residues 320–331 are Lumenal-facing; it reads VAMCIGYTFLRA. A helical membrane pass occupies residues 332 to 349; it reads MVFFMAIVVAYVPEGLLA. 4 residues coordinate K(+): valine 340, alanine 341, valine 343, and glutamate 345. At 350-783 the chain is on the cytoplasmic side; sequence TVTVCLSLTA…EQGRLIFDNL (434 aa). The active-site 4-aspartylphosphate intermediate is aspartate 387. Residues aspartate 387 and threonine 389 each coordinate Mg(2+). 2 positions are modified to phosphoserine: serine 463 and serine 601. Mg(2+) is bound by residues aspartate 728 and aspartate 732. The chain crosses the membrane as a helical span at residues 784–803; sequence KKSIAYTLTKNIPELTPYLI. Glutamate 797 is a K(+) binding site. Over 804-813 the chain is Lumenal; the sequence is YITVSVPLPL. A helical transmembrane segment spans residues 814-834; that stretch reads GCITILFIELCTDIFPSVSLA. Glutamate 822 provides a ligand contact to K(+). The Cytoplasmic segment spans residues 835–854; the sequence is YEKAESDIMHLRPRNPKRDR. Serine 840 bears the Phosphoserine mark. The chain crosses the membrane as a helical span at residues 855–877; sequence LVNEPLAAYSYFQIGAIQSFAGF. Over 878-929 the chain is Lumenal; the sequence is TDYFTAMAQEGWFPLLCVGLRPQWEDHHLQDLQDSYGQEWTFGQRLYQQYTC. A helical membrane pass occupies residues 930–949; it reads YTVFFISIEMCQIADVLIRK. Residues 950–963 lie on the Cytoplasmic side of the membrane; it reads TRRLSAFQQGFFRN. At serine 954 the chain carries Phosphoserine; by PKA. The chain crosses the membrane as a helical span at residues 964–982; sequence RILVIAIVFQVCIGCFLCY. Residues 983–997 are Lumenal-facing; that stretch reads CPGMPNIFNFMPIRF. A helical membrane pass occupies residues 998 to 1018; the sequence is QWWLVPMPFGLLIFVYDEIRK. Over 1019-1035 the chain is Cytoplasmic; the sequence is LGVRCCPGSWWDQELYY.

This sequence belongs to the cation transport ATPase (P-type) (TC 3.A.3) family. Type IIC subfamily. In terms of assembly, the gastric H(+)/K(+) ATPase pump is composed of the catalytic alpha subunit ATP4A and the regulatory beta subunit ATP4B. Interacts (via the P-domain) with ATP4B (via N-terminus); this interaction stabilizes the lumenal-open E2 conformation state and prevents the reverse reaction of the transport cycle.

The protein resides in the apical cell membrane. It localises to the cell membrane. It catalyses the reaction K(+)(out) + ATP + H2O + H(+)(in) = K(+)(in) + ADP + phosphate + 2 H(+)(out). Functionally, the catalytic subunit of the gastric H(+)/K(+) ATPase pump which transports H(+) ions in exchange for K(+) ions across the apical membrane of parietal cells. Uses ATP as an energy source to pump H(+) ions to the gastric lumen while transporting K(+) ion from the lumen into the cell. Remarkably generates a million-fold proton gradient across the gastric parietal cell membrane, acidifying the gastric juice down to pH 1. Within a transport cycle, the transfer of a H(+) ion across the membrane is coupled to ATP hydrolysis and is associated with a transient phosphorylation that shifts the pump conformation from inward-facing (E1) to outward-facing state (E2). The release of the H(+) ion in the stomach lumen is followed by binding of K(+) ion converting the pump conformation back to the E1 state. The polypeptide is Potassium-transporting ATPase alpha chain 1 (ATP4A) (Oryctolagus cuniculus (Rabbit)).